Consider the following 242-residue polypeptide: Probable transcriptional regulatory protein lhv_0777 (242 aa).

The disordered stretch occupies residues 1-22; sequence MSGHSKWHNIQGRKNAQDAKRG.

Belongs to the TACO1 family.

The protein resides in the cytoplasm. The chain is Probable transcriptional regulatory protein lhv_0777 from Lactobacillus helveticus (strain DPC 4571).